Here is a 315-residue protein sequence, read N- to C-terminus: Glutamyl-Q tRNA(Asp) synthetase (315 aa).

L-glutamate contacts are provided by residues 12–16 and Glu-48; that span reads RFAPS. The 'HIGH' region motif lies at 15–25; sequence PSPSGPLHFGS. Cys-104, Cys-106, Tyr-124, and Cys-128 together coordinate Zn(2+). Positions 181 and 199 each coordinate L-glutamate. The 'KMSKS' region motif lies at 237-241; that stretch reads KLSKQ. ATP is bound at residue Lys-240.

This sequence belongs to the class-I aminoacyl-tRNA synthetase family. GluQ subfamily. Zn(2+) serves as cofactor.

Catalyzes the tRNA-independent activation of glutamate in presence of ATP and the subsequent transfer of glutamate onto a tRNA(Asp). Glutamate is transferred on the 2-amino-5-(4,5-dihydroxy-2-cyclopenten-1-yl) moiety of the queuosine in the wobble position of the QUC anticodon. The polypeptide is Glutamyl-Q tRNA(Asp) synthetase (Aromatoleum aromaticum (strain DSM 19018 / LMG 30748 / EbN1) (Azoarcus sp. (strain EbN1))).